The following is a 194-amino-acid chain: E3 ubiquitin-protein ligase RNF185 (194 aa).

The span at 1–27 (MASAAASESSSSSSSSSAGAANGQSAG) shows a compositional bias: low complexity. Positions 1–32 (MASAAASESSSSSSSSSAGAANGQSAGESGGG) are disordered. Positions 31–82 (GGGAQDSTFECNICLDTSKDAVISLCGHLFCWPCLHQWLETRPNRQVCPVCK) are required for ubiquitin ligase activity and protection against ER stress-induced cell death. An RING-type zinc finger spans residues 41-82 (CNICLDTSKDAVISLCGHLFCWPCLHQWLETRPNRQVCPVCK). Residues 92–126 (PLYGRGSTGQQDPREKTPPRPQGQRPEPENRGGFQ) form a disordered region. The next 2 membrane-spanning stretches (helical) occupy residues 133–153 (GGFQ…ATAF) and 174–194 (QFLS…LLIA).

The protein resides in the mitochondrion outer membrane. It localises to the endoplasmic reticulum membrane. The catalysed reaction is S-ubiquitinyl-[E2 ubiquitin-conjugating enzyme]-L-cysteine + [acceptor protein]-L-lysine = [E2 ubiquitin-conjugating enzyme]-L-cysteine + N(6)-ubiquitinyl-[acceptor protein]-L-lysine.. The protein operates within protein modification; protein ubiquitination. Functionally, E3 ubiquitin-protein ligase that regulates selective mitochondrial autophagy by mediating 'Lys-63'-linked polyubiquitination. Acts in the endoplasmic reticulum (ER)-associated degradation (ERAD) pathway, which targets misfolded proteins that accumulate in the endoplasmic reticulum (ER) for ubiquitination and subsequent proteasome-mediated degradation. Protects cells from ER stress-induced apoptosis. Responsible for the cotranslational ubiquitination and degradation of CFTR in the ERAD pathway. Also acts as a regulator of the innate antiviral response by catalyzing 'Lys-27'-linked polyubiquitination of CGAS, thereby promoting CGAS cyclic GMP-AMP synthase activity. Preferentially associates with the E2 enzymes UBE2J1 and UBE2J2. The protein is E3 ubiquitin-protein ligase RNF185 (rnf185) of Danio rerio (Zebrafish).